The sequence spans 266 residues: Vitamin B12-binding protein (266 aa).

An N-terminal signal peptide occupies residues 1 to 22; that stretch reads MAKSLFRALVALSFLAPLWLNA. One can recognise a Fe/B12 periplasmic-binding domain in the interval 25–266; sequence RVITLSPANT…QLCNALSQVD (242 aa). Residues tyrosine 50 and 242 to 246 each bind cyanocob(III)alamin; that span reads DWFER. An intrachain disulfide couples cysteine 183 to cysteine 259.

The protein belongs to the BtuF family. The complex is composed of two ATP-binding proteins (BtuD), two transmembrane proteins (BtuC) and a solute-binding protein (BtuF).

The protein resides in the periplasm. In terms of biological role, part of the ABC transporter complex BtuCDF involved in vitamin B12 import. Binds vitamin B12 and delivers it to the periplasmic surface of BtuC. The chain is Vitamin B12-binding protein from Shigella flexneri.